The chain runs to 330 residues: Tyrosine-protein phosphatase yvh1 (330 aa).

The 143-residue stretch at 45-187 folds into the Tyrosine-protein phosphatase domain; that stretch reads NDLSEISKNL…LRVYFECNYQ (143 aa). Cys131 acts as the Phosphocysteine intermediate in catalysis.

Belongs to the protein-tyrosine phosphatase family. Non-receptor class dual specificity subfamily.

It is found in the cytoplasm. The protein resides in the nucleus. It catalyses the reaction O-phospho-L-tyrosyl-[protein] + H2O = L-tyrosyl-[protein] + phosphate. In terms of biological role, may be directly involved in signal transduction and/or cell cycle regulation. It is necessary for maintaining growth rate or spore germination. Could show both activity toward tyrosine-protein phosphate as well as with serine-protein phosphate. The protein is Tyrosine-protein phosphatase yvh1 (yvh1) of Schizosaccharomyces pombe (strain 972 / ATCC 24843) (Fission yeast).